A 342-amino-acid chain; its full sequence is Thiosulfate/3-mercaptopyruvate sulfurtransferase 2 (342 aa).

Rhodanese domains are found at residues 56 to 173 (GDAD…DVES) and 224 to 338 (EDKT…LPIV). Cys-298 serves as the catalytic Cysteine persulfide intermediate.

As to expression, expressed in roots, rosette and cauline leaves, stems, flowers and siliques.

It is found in the cytoplasm. It carries out the reaction thiosulfate + hydrogen cyanide = thiocyanate + sulfite + 2 H(+). It catalyses the reaction 2-oxo-3-sulfanylpropanoate + [thioredoxin]-dithiol = [thioredoxin]-disulfide + hydrogen sulfide + pyruvate + H(+). Catalyzes the transfer of a sulfur ion from a donor to cyanide or to other thiol compounds. Substrate preference is 3-mercaptopyruvate &gt; thiosulfate. Involved in embryo and seed development. In Arabidopsis thaliana (Mouse-ear cress), this protein is Thiosulfate/3-mercaptopyruvate sulfurtransferase 2 (STR2).